The primary structure comprises 579 residues: 2-isopropylmalate synthase (579 aa).

Positions 40–314 constitute a Pyruvate carboxyltransferase domain; it reads PRWCAVDLRD…DPMIDFSDID (275 aa). Mg(2+) is bound by residues D49, H253, H255, and N289. A regulatory domain region spans residues 456–579; the sequence is SSKEDGQWGR…VNRAIRDAQA (124 aa).

The protein belongs to the alpha-IPM synthase/homocitrate synthase family. LeuA type 2 subfamily. In terms of assembly, homodimer. Mg(2+) serves as cofactor.

The protein localises to the cytoplasm. The enzyme catalyses 3-methyl-2-oxobutanoate + acetyl-CoA + H2O = (2S)-2-isopropylmalate + CoA + H(+). It functions in the pathway amino-acid biosynthesis; L-leucine biosynthesis; L-leucine from 3-methyl-2-oxobutanoate: step 1/4. Catalyzes the condensation of the acetyl group of acetyl-CoA with 3-methyl-2-oxobutanoate (2-ketoisovalerate) to form 3-carboxy-3-hydroxy-4-methylpentanoate (2-isopropylmalate). The protein is 2-isopropylmalate synthase of Arthrobacter sp. (strain FB24).